Consider the following 181-residue polypeptide: UPF0397 protein str0306 (181 aa).

5 helical membrane-spanning segments follow: residues 11-31 (ATGI…IPIF), 45-65 (LFSV…GHAL), 72-92 (GNIS…IGLF), 109-129 (IWFN…VTPI), and 147-167 (FVAG…LLAI).

This sequence belongs to the UPF0397 family.

The protein localises to the cell membrane. This chain is UPF0397 protein str0306, found in Streptococcus thermophilus (strain CNRZ 1066).